A 306-amino-acid polypeptide reads, in one-letter code: D-alanine--D-alanine ligase (306 aa).

The region spanning 102–300 (KIVVASVGVS…YGDIVQWMVE (199 aa)) is the ATP-grasp domain. Position 128-183 (128-183 (PMEPPYVIKPVCEGSSLGVIIVKENESVPSLNVVGSEWVYADTVIVEKYIPGRELT)) interacts with ATP. Residues Asp253, Glu267, and Asn269 each contribute to the Mg(2+) site.

It belongs to the D-alanine--D-alanine ligase family. It depends on Mg(2+) as a cofactor. The cofactor is Mn(2+).

Its subcellular location is the cytoplasm. The catalysed reaction is 2 D-alanine + ATP = D-alanyl-D-alanine + ADP + phosphate + H(+). It participates in cell wall biogenesis; peptidoglycan biosynthesis. Its function is as follows. Cell wall formation. The sequence is that of D-alanine--D-alanine ligase from Bartonella henselae (strain ATCC 49882 / DSM 28221 / CCUG 30454 / Houston 1) (Rochalimaea henselae).